Here is a 223-residue protein sequence, read N- to C-terminus: V-type ATP synthase subunit D (223 aa).

Residues 203–223 (AREAEEEGGRPNPQVEIGAGL) are disordered.

The protein belongs to the V-ATPase D subunit family.

In terms of biological role, produces ATP from ADP in the presence of a proton gradient across the membrane. The polypeptide is V-type ATP synthase subunit D (Thermus thermophilus (strain ATCC BAA-163 / DSM 7039 / HB27)).